A 369-amino-acid chain; its full sequence is Histidinol-phosphate aminotransferase 2 (369 aa).

Lysine 227 bears the N6-(pyridoxal phosphate)lysine mark.

Belongs to the class-II pyridoxal-phosphate-dependent aminotransferase family. Histidinol-phosphate aminotransferase subfamily. In terms of assembly, homodimer. Pyridoxal 5'-phosphate serves as cofactor.

The enzyme catalyses L-histidinol phosphate + 2-oxoglutarate = 3-(imidazol-4-yl)-2-oxopropyl phosphate + L-glutamate. Its pathway is amino-acid biosynthesis; L-histidine biosynthesis; L-histidine from 5-phospho-alpha-D-ribose 1-diphosphate: step 7/9. This chain is Histidinol-phosphate aminotransferase 2 (hisC2), found in Mesorhizobium japonicum (strain LMG 29417 / CECT 9101 / MAFF 303099) (Mesorhizobium loti (strain MAFF 303099)).